Consider the following 337-residue polypeptide: MTASTKVRVAVTQHEPVWLDLHATVDKTCRLIAEAAGNGAQLITFPECWLPGYPAWIWCRPVDMGLFTTYLKNSLSYDSEHMRRICNAAAQHKITVVLGLSERDGNSLYIGQCTIDSTGKIVMRRRKMKPTHMERTVFGESSGRSLLNVVDLPIGKVGALACWEHIQPLLKYHTMIQGEEIHVSAWPVLHPHMGGESLWGMSQEGGTGASQVYALESASFVLLTTAVLGPTCVKKMNLSPPWDTLGGGASAVIAPDGRRLTEPLPANEEGFVYADLDLDMILTCRHFVDACGHYSRPDLLWLGVDTREKTQHRPEGQADNAAYGLDVPSGLVEEEGA.

Residues 7 to 278 (VRVAVTQHEP…EGFVYADLDL (272 aa)) form the CN hydrolase domain. The Proton acceptor role is filled by Glu-47. The active site involves Lys-127. Cys-162 acts as the Nucleophile in catalysis. A disordered region spans residues 311–337 (QHRPEGQADNAAYGLDVPSGLVEEEGA).

This sequence belongs to the carbon-nitrogen hydrolase superfamily. Nitrilase family.

The catalysed reaction is a nitrile + 2 H2O = a carboxylate + NH4(+). It carries out the reaction 4-chlorophenylacetonitrile + 2 H2O = 4-chlorophenylacetate + NH4(+). In terms of biological role, nitrilase that hydrolyzes preferentially phenylacetonitrile, but also (R,S)-mandelonitrile, and 2-phenylpropionitrile. In Aspergillus niger (strain ATCC MYA-4892 / CBS 513.88 / FGSC A1513), this protein is Arylacetonitrilase.